Here is an 848-residue protein sequence, read N- to C-terminus: Translation initiation factor IF-2 (848 aa).

Residues 1 to 10 (MSENNNDKIT) show a composition bias toward basic and acidic residues. Disordered regions lie at residues 1–79 (MSEN…EKPV) and 121–163 (AERQ…LFSS). The segment covering 17 to 33 (LKRSGSETNTVKQNFNH) has biased composition (polar residues). Positions 121-138 (AERQAAEKQAKESEEGLH) are enriched in basic and acidic residues. The span at 149 to 163 (KSSSNTTKPTPLFSS) shows a compositional bias: polar residues. One can recognise a tr-type G domain in the interval 346-513 (TRPPIVTIMG…AILLQAEILD (168 aa)). The segment at 355–362 (GHVDHGKT) is G1. 355 to 362 (GHVDHGKT) contributes to the GTP binding site. Residues 380-384 (GITQH) form a G2 region. A G3 region spans residues 401–404 (DTPG). GTP is bound by residues 401–405 (DTPGH) and 455–458 (NKID). A G4 region spans residues 455–458 (NKID). Residues 491-493 (SAK) form a G5 region.

This sequence belongs to the TRAFAC class translation factor GTPase superfamily. Classic translation factor GTPase family. IF-2 subfamily.

It is found in the cytoplasm. In terms of biological role, one of the essential components for the initiation of protein synthesis. Protects formylmethionyl-tRNA from spontaneous hydrolysis and promotes its binding to the 30S ribosomal subunits. Also involved in the hydrolysis of GTP during the formation of the 70S ribosomal complex. The chain is Translation initiation factor IF-2 from Bartonella bacilliformis (strain ATCC 35685 / KC583 / Herrer 020/F12,63).